Reading from the N-terminus, the 419-residue chain is MHVSELQTLHISKLLELAEEHGIENANRFRKQDLVFAIVRQMMKKGEGFTCSGTLEILPDGFGFLRSADTSYLAGPDDIYVSPTQIRRFNLHTGDTIEGSVRVPKDNERYFALVRLDSINGDHPEVCRHKILFENLTPLFPTEQLKLERDLKSEENLTGRAIDLISPIGKGQRALLVAPPKIGKTVMLENIAHEVTANYPEVELIVLLIDERPEEVTEMSRSVRGEVVSSTFDEPAQRHVQVAEMVLEKAKRMVEHKKDVVILLDSITRLARAYNTVVPASGKILTGGVDANALHRPKRFFGAARNVEEGGSLTIIATALVETGSRMDDVIYEEFKGTGNMELHLDRRIAEKRLFPAININKSGTRREELLVPNDQLQRMWLLRKFLHPMDEIEATEFLNGKIKASKNNDDFFELMRGK.

The region spanning 48-123 is the Rho RNA-BD domain; sequence GFTCSGTLEI…VRLDSINGDH (76 aa). Residues 169–174, 181–186, and arginine 212 each bind ATP; these read GKGQRA and KIGKTV.

It belongs to the Rho family. As to quaternary structure, homohexamer. The homohexamer assembles into an open ring structure.

Functionally, facilitates transcription termination by a mechanism that involves Rho binding to the nascent RNA, activation of Rho's RNA-dependent ATPase activity, and release of the mRNA from the DNA template. This is Transcription termination factor Rho from Neisseria gonorrhoeae.